Reading from the N-terminus, the 88-residue chain is Apolipoprotein C-I (88 aa).

The signal sequence occupies residues 1–26; that stretch reads MRLFIALPVLIVVVAMTLEGPAPAQA.

This sequence belongs to the apolipoprotein C1 family. In terms of tissue distribution, adult and fetal liver.

It localises to the secreted. In terms of biological role, inhibitor of lipoprotein binding to the low density lipoprotein (LDL) receptor, LDL receptor-related protein, and very low density lipoprotein (VLDL) receptor. Associates with high density lipoproteins (HDL) and the triacylglycerol-rich lipoproteins in the plasma and makes up about 10% of the protein of the VLDL and 2% of that of HDL. Appears to interfere directly with fatty acid uptake and is also the major plasma inhibitor of cholesteryl ester transfer protein (CETP). Modulates the interaction of APOE with beta-migrating VLDL and inhibits binding of beta-VLDL to the LDL receptor-related protein. Binds free fatty acids and reduces their intracellular esterification. This is Apolipoprotein C-I (Apoc1) from Mus musculus (Mouse).